Here is a 361-residue protein sequence, read N- to C-terminus: Lactate-binding periplasmic protein TTHA0766 (361 aa).

The tat-type signal signal peptide spans 1–22 (MKRVSRRAFLRRLGVGVAATAA). The substrate site is built by Tyr101, Asn158, and Arg178. Asn158 serves as a coordination point for Ca(2+). 3 residues coordinate Ca(2+): Asp216, Phe217, and Gln247. Substrate-binding positions include Phe217 and 247–250 (QPVD).

Belongs to the bacterial solute-binding protein 7 family. As to quaternary structure, homodimer. The complex comprises the extracytoplasmic solute receptor protein TTHA0766, and the two putative transmembrane proteins TTHA0767 and TTHA0768.

The protein resides in the periplasm. Its function is as follows. Part of the tripartite ATP-independent periplasmic (TRAP) transport system involved in the uptake of lactate. This protein specifically binds L-lactate. This is Lactate-binding periplasmic protein TTHA0766 from Thermus thermophilus (strain ATCC 27634 / DSM 579 / HB8).